The chain runs to 372 residues: 4-hydroxy-3-methylbut-2-en-1-yl diphosphate synthase (flavodoxin) (372 aa).

Residues cysteine 270, cysteine 273, cysteine 305, and glutamate 312 each coordinate [4Fe-4S] cluster.

Belongs to the IspG family. The cofactor is [4Fe-4S] cluster.

It catalyses the reaction (2E)-4-hydroxy-3-methylbut-2-enyl diphosphate + oxidized [flavodoxin] + H2O + 2 H(+) = 2-C-methyl-D-erythritol 2,4-cyclic diphosphate + reduced [flavodoxin]. It participates in isoprenoid biosynthesis; isopentenyl diphosphate biosynthesis via DXP pathway; isopentenyl diphosphate from 1-deoxy-D-xylulose 5-phosphate: step 5/6. Converts 2C-methyl-D-erythritol 2,4-cyclodiphosphate (ME-2,4cPP) into 1-hydroxy-2-methyl-2-(E)-butenyl 4-diphosphate. In Idiomarina loihiensis (strain ATCC BAA-735 / DSM 15497 / L2-TR), this protein is 4-hydroxy-3-methylbut-2-en-1-yl diphosphate synthase (flavodoxin).